The following is a 146-amino-acid chain: Ribonuclease H (146 aa).

Residues 1 to 143 enclose the RNase H type-1 domain; it reads MKKRVTIYTD…CDELARQAIK (143 aa). Residues Asp10, Glu48, Asp70, and Asp135 each coordinate Mg(2+).

Belongs to the RNase H family. In terms of assembly, monomer. Requires Mg(2+) as cofactor.

It is found in the cytoplasm. It carries out the reaction Endonucleolytic cleavage to 5'-phosphomonoester.. In terms of biological role, endonuclease that specifically degrades the RNA of RNA-DNA hybrids. The protein is Ribonuclease H of Chlorobium limicola (strain DSM 245 / NBRC 103803 / 6330).